The primary structure comprises 313 residues: Beta-lactamase FAR-1 (313 aa).

Residues 1-28 (MPGVDISFLKKSGRRTMAAAAVIALLGG) form the signal peptide. Cysteine 29 is lipidated: N-palmitoyl cysteine. Cysteine 29 carries the S-diacylglycerol cysteine lipid modification. Serine 94 serves as the catalytic Acyl-ester intermediate. Serine 154 provides a ligand contact to substrate. Glutamate 190 functions as the Proton acceptor in the catalytic mechanism. Residue 258-260 (KTG) coordinates substrate.

It belongs to the class-A beta-lactamase family.

Its subcellular location is the cell membrane. It catalyses the reaction a beta-lactam + H2O = a substituted beta-amino acid. Its activity is regulated as follows. Inhibited by clavulanic acid, and at a low level by tazobactam and sulbactam. Confers high levels of resistance to amoxicillin, benzylpenicillin, piperacillin, ticarcillin and cephalothin. Also hydrolyzes aztreonam at a low level. Not active against ceftazidime, cefotaxime and imipenem. The protein is Beta-lactamase FAR-1 (bla) of Nocardia farcinica (strain IFM 10152).